A 410-amino-acid polypeptide reads, in one-letter code: Transforming growth factor beta-3 proprotein (410 aa).

Residues 1–23 (MHLQRALVVLALLNLATISLSLS) form the signal peptide. N-linked (GlcNAc...) asparagine glycosylation is found at Asn72, Asn133, and Asn140. The Cell attachment site signature appears at 259-261 (RGD). Gln291 bears the N5-methylglutamine mark. Cystine bridges form between Cys305–Cys314, Cys313–Cys376, Cys342–Cys407, and Cys346–Cys409.

This sequence belongs to the TGF-beta family. As to quaternary structure, interacts with ASPN. Latency-associated peptide: Homodimer; disulfide-linked. Latency-associated peptide: Interacts with Transforming growth factor beta-3 (TGF-beta-3) chain; interaction is non-covalent and maintains (TGF-beta-3) in a latent state. Latency-associated peptide: Interacts with LRRC32/GARP; leading to regulate activation of TGF-beta-3 and promote epithelial fusion during palate development. Latency-associated peptide: Interacts (via cell attachment site) with integrins, leading to release of the active TGF-beta-3. Transforming growth factor beta-3: Homodimer; disulfide-linked. Transforming growth factor beta-3: Interacts with TGF-beta receptors (TGFBR1 and TGFBR2), leading to signal transduction. Post-translationally, transforming growth factor beta-3 proprotein: The precursor proprotein is cleaved in the Golgi apparatus to form Transforming growth factor beta-3 (TGF-beta-3) and Latency-associated peptide (LAP) chains, which remain non-covalently linked, rendering TGF-beta-3 inactive. Methylated at Gln-291 by N6AMT1. As to expression, expressed in mammary glands with a slight increase in expression prior to lactation and again increasing at the onset of involution, expression peaks at day 3 of involution.

The protein localises to the secreted. It is found in the extracellular space. It localises to the extracellular matrix. In terms of biological role, transforming growth factor beta-3 proprotein: Precursor of the Latency-associated peptide (LAP) and Transforming growth factor beta-3 (TGF-beta-3) chains, which constitute the regulatory and active subunit of TGF-beta-3, respectively. Required to maintain the Transforming growth factor beta-3 (TGF-beta-3) chain in a latent state during storage in extracellular matrix. Associates non-covalently with TGF-beta-3 and regulates its activation via interaction with 'milieu molecules', such as LTBP1 and LRRC32/GARP, that control activation of TGF-beta-3. Interaction with integrins results in distortion of the Latency-associated peptide chain and subsequent release of the active TGF-beta-3. Its function is as follows. Transforming growth factor beta-3: Multifunctional protein that regulates embryogenesis and cell differentiation and is required in various processes such as secondary palate development. Activation into mature form follows different steps: following cleavage of the proprotein in the Golgi apparatus, Latency-associated peptide (LAP) and Transforming growth factor beta-3 (TGF-beta-3) chains remain non-covalently linked rendering TGF-beta-3 inactive during storage in extracellular matrix. At the same time, LAP chain interacts with 'milieu molecules', such as LTBP1 and LRRC32/GARP that control activation of TGF-beta-3 and maintain it in a latent state during storage in extracellular milieus. TGF-beta-3 is released from LAP by integrins: integrin-binding results in distortion of the LAP chain and subsequent release of the active TGF-beta-3. Once activated following release of LAP, TGF-beta-3 acts by binding to TGF-beta receptors (TGFBR1 and TGFBR2), which transduce signal. This is Transforming growth factor beta-3 proprotein from Mus musculus (Mouse).